The following is a 290-amino-acid chain: Protein SET (290 aa).

Residues 1–45 (MAPKRQSPLPPQKKKPRPPPALGPEETSASAGLPKKGEKEQQEAI) are disordered. A2 is subject to N,N,N-trimethylalanine. S7 bears the Phosphoserine mark. Residue P11 is modified to N6-acetyllysine. A phosphoserine mark is found at K15, P24, and S28. The interval 31 to 78 (AGLPKKGEKEQQEAIEHIDEVQNEIDRLNEQASEEILKVEQKYNKLRQ) is dimerization. Positions 35–45 (KKGEKEQQEAI) are enriched in basic and acidic residues. S63 is subject to Phosphoserine. At K68 the chain carries N6-acetyllysine. Residues 79–225 (PFFQKRSELI…ELGEVIKDDI (147 aa)) are earmuff domain. Phosphotyrosine is present on Y146. K150 is subject to N6-acetyllysine. K154 participates in a covalent cross-link: Glycyl lysine isopeptide (Lys-Gly) (interchain with G-Cter in ubiquitin). Disordered regions lie at residues 158–207 (LNES…TWFT) and 236–290 (PDMD…GEDD). A compositionally biased stretch (basic and acidic residues) spans 169-181 (TEIKWKSGKDLTK). K172 is subject to N6-acetyllysine. Residues 237 to 290 (DMDDEEGEGEEDDDDDEEEEGLEDIDEEGDEDEGEEDEDDDEGEEGEEDEGEDD) show a composition bias toward acidic residues.

Belongs to the nucleosome assembly protein (NAP) family. Headphone-shaped homodimer. Isoforms 1 and 2 interact directly with each other and with ANP32A within the tripartite INHAT (inhibitor of acetyltransferases) complex. Isoform 1 and isoform 2 interact also with histones. Isoform 2 is a component of the SET complex, composed of at least ANP32A, APEX1, HMGB2, NME1, SET and TREX1, but not NME2 or TREX2. Within this complex, directly interacts with ANP32A, NME1, HMGB2 and TREX1; the interaction with ANP32A is enhanced after cleavage. Interacts with APBB1, CHTOP, SETBP1, SGO1. In terms of assembly, (Microbial infection) Interacts with herpes simplex virus 1 VP22. Isoform 2 is phosphorylated on Ser-15 and Ser-24. In terms of processing, isoform 2 is acetylated on Lys-11. Post-translationally, some glutamate residues are glycylated by TTLL8. This modification occurs exclusively on glutamate residues and results in a glycine chain on the gamma-carboxyl group. N-terminus of isoform 1 is methylated by METTL11A/NTM1. Mainly trimethylated. In terms of processing, cleaved after Lys-176 by GZMA. The cleavage inhibits its nucleosome assembly activity and disrupts the inhibition on NME1. As to expression, widely expressed. Low levels in quiescent cells during serum starvation, contact inhibition or differentiation. Highly expressed in Wilms' tumor.

Its subcellular location is the cytoplasm. It is found in the cytosol. The protein resides in the endoplasmic reticulum. It localises to the nucleus. The protein localises to the nucleoplasm. Its function is as follows. Multitasking protein, involved in apoptosis, transcription, nucleosome assembly and histone chaperoning. Isoform 2 anti-apoptotic activity is mediated by inhibition of the GZMA-activated DNase, NME1. In the course of cytotoxic T-lymphocyte (CTL)-induced apoptosis, GZMA cleaves SET, disrupting its binding to NME1 and releasing NME1 inhibition. Isoform 1 and isoform 2 are potent inhibitors of protein phosphatase 2A. Isoform 1 and isoform 2 inhibit EP300/CREBBP and PCAF-mediated acetylation of histones (HAT) and nucleosomes, most probably by masking the accessibility of lysines of histones to the acetylases. The predominant target for inhibition is histone H4. HAT inhibition leads to silencing of HAT-dependent transcription and prevents active demethylation of DNA. Both isoforms stimulate DNA replication of the adenovirus genome complexed with viral core proteins; however, isoform 2 specific activity is higher. In Homo sapiens (Human), this protein is Protein SET (SET).